The primary structure comprises 63 residues: Large ribosomal subunit protein uL30 (63 aa).

This sequence belongs to the universal ribosomal protein uL30 family. Part of the 50S ribosomal subunit.

The protein is Large ribosomal subunit protein uL30 of Hahella chejuensis (strain KCTC 2396).